The sequence spans 461 residues: Bifunctional protein GlmU (461 aa).

Residues 1–229 (MLKKEINVVI…CKEILGVNNK (229 aa)) form a pyrophosphorylase region. Residues 11 to 14 (LAAG), Lys25, Gln76, 81 to 82 (GT), 103 to 105 (YGD), Gly140, Glu154, and Asn227 contribute to the UDP-N-acetyl-alpha-D-glucosamine site. Residue Asp105 coordinates Mg(2+). Asn227 is a Mg(2+) binding site. Positions 230–250 (LQLSILEKIFRKKQVNDLLLS) are linker. The segment at 251 to 461 (GVTLKDPNHF…PQKIIKKTDQ (211 aa)) is N-acetyltransferase. 2 residues coordinate UDP-N-acetyl-alpha-D-glucosamine: Arg333 and Lys351. His363 functions as the Proton acceptor in the catalytic mechanism. 2 residues coordinate UDP-N-acetyl-alpha-D-glucosamine: Tyr366 and Asn377. Residues Ala380, 386-387 (NY), and Ala423 each bind acetyl-CoA.

This sequence in the N-terminal section; belongs to the N-acetylglucosamine-1-phosphate uridyltransferase family. The protein in the C-terminal section; belongs to the transferase hexapeptide repeat family. As to quaternary structure, homotrimer. Requires Mg(2+) as cofactor.

It localises to the cytoplasm. The catalysed reaction is alpha-D-glucosamine 1-phosphate + acetyl-CoA = N-acetyl-alpha-D-glucosamine 1-phosphate + CoA + H(+). The enzyme catalyses N-acetyl-alpha-D-glucosamine 1-phosphate + UTP + H(+) = UDP-N-acetyl-alpha-D-glucosamine + diphosphate. It functions in the pathway nucleotide-sugar biosynthesis; UDP-N-acetyl-alpha-D-glucosamine biosynthesis; N-acetyl-alpha-D-glucosamine 1-phosphate from alpha-D-glucosamine 6-phosphate (route II): step 2/2. Its pathway is nucleotide-sugar biosynthesis; UDP-N-acetyl-alpha-D-glucosamine biosynthesis; UDP-N-acetyl-alpha-D-glucosamine from N-acetyl-alpha-D-glucosamine 1-phosphate: step 1/1. The protein operates within bacterial outer membrane biogenesis; LPS lipid A biosynthesis. Functionally, catalyzes the last two sequential reactions in the de novo biosynthetic pathway for UDP-N-acetylglucosamine (UDP-GlcNAc). The C-terminal domain catalyzes the transfer of acetyl group from acetyl coenzyme A to glucosamine-1-phosphate (GlcN-1-P) to produce N-acetylglucosamine-1-phosphate (GlcNAc-1-P), which is converted into UDP-GlcNAc by the transfer of uridine 5-monophosphate (from uridine 5-triphosphate), a reaction catalyzed by the N-terminal domain. The polypeptide is Bifunctional protein GlmU (Buchnera aphidicola subsp. Schizaphis graminum (strain Sg)).